The sequence spans 137 residues: Small ribosomal subunit protein bS6 (137 aa).

The disordered stretch occupies residues 96-137; it reads ITEASPMAKAKDERDTRRSSEERAPRAEAAEEVEESAENTAE. A compositionally biased stretch (basic and acidic residues) spans 104–124; it reads KAKDERDTRRSSEERAPRAEA. Positions 125–137 are enriched in acidic residues; sequence AEEVEESAENTAE.

This sequence belongs to the bacterial ribosomal protein bS6 family.

Binds together with bS18 to 16S ribosomal RNA. The chain is Small ribosomal subunit protein bS6 from Shewanella halifaxensis (strain HAW-EB4).